Reading from the N-terminus, the 308-residue chain is Acyl transferase (308 aa).

Active-site charge relay system residues include Ser-116, Asp-213, and His-243.

The protein belongs to the LuxD family.

Its pathway is lipid metabolism; fatty acid reduction for biolumincescence. Acyl transferase is part of the fatty acid reductase system required for aldehyde biosynthesis; it produces fatty acids for the luminescent reaction. The sequence is that of Acyl transferase from Shewanella hanedai (Alteromonas hanedai).